Reading from the N-terminus, the 343-residue chain is MAKRQLNRRQNWRIEKIQGERAARAAKRESVTLETLEGGDLGPEQTGLVIAHFGVQVEVEAQEGEDVGKVFRCHLRANLPALVTGDRVVWRAGNQGIGVIVAQLPRTTELRRPDSRGQLKPVAANVDLIVIVFAPMPEPHANLIDRYLVAAEHAGIHPLLLLNKADLIDEQNAPALNALLAVYRTLGYPVLEVSAHQGDGMQSLQSQLDGHISVFVGQSGVGKSSLVNSLLPETDTRVGPLSEVSGQGTHTTTTARLFHFPRGGDLIDSPGIREFGLGHVSRADVEAGFIEFNDLIGTCRFRDCKHDREPGCALLKGLEDGRVQQQRMNSYRSIIASLPQDSY.

The CP-type G domain occupies 116–275 (RGQLKPVAAN…LIDSPGIREF (160 aa)). Residues 163–166 (NKAD) and 217–225 (GQSGVGKSS) contribute to the GTP site. Residues cysteine 299, cysteine 304, histidine 306, and cysteine 312 each contribute to the Zn(2+) site.

The protein belongs to the TRAFAC class YlqF/YawG GTPase family. RsgA subfamily. Monomer. Associates with 30S ribosomal subunit, binds 16S rRNA. Zn(2+) serves as cofactor.

It is found in the cytoplasm. In terms of biological role, one of several proteins that assist in the late maturation steps of the functional core of the 30S ribosomal subunit. Helps release RbfA from mature subunits. May play a role in the assembly of ribosomal proteins into the subunit. Circularly permuted GTPase that catalyzes slow GTP hydrolysis, GTPase activity is stimulated by the 30S ribosomal subunit. This Pseudomonas syringae pv. tomato (strain ATCC BAA-871 / DC3000) protein is Small ribosomal subunit biogenesis GTPase RsgA.